Consider the following 233-residue polypeptide: Cytochrome c biogenesis ATP-binding export protein CcmA (233 aa).

Positions 17–233 (FAGEDLLCVR…AAGLFLEDEG (217 aa)) constitute an ABC transporter domain. Position 49–56 (49–56 (GPNGSGKS)) interacts with ATP.

The protein belongs to the ABC transporter superfamily. CcmA exporter (TC 3.A.1.107) family. In terms of assembly, the complex is composed of two ATP-binding proteins (CcmA) and two transmembrane proteins (CcmB).

The protein resides in the cell inner membrane. The enzyme catalyses heme b(in) + ATP + H2O = heme b(out) + ADP + phosphate + H(+). Part of the ABC transporter complex CcmAB involved in the biogenesis of c-type cytochromes; once thought to export heme, this seems not to be the case, but its exact role is uncertain. Responsible for energy coupling to the transport system. The protein is Cytochrome c biogenesis ATP-binding export protein CcmA of Rhodospirillum rubrum (strain ATCC 11170 / ATH 1.1.1 / DSM 467 / LMG 4362 / NCIMB 8255 / S1).